The following is a 259-amino-acid chain: Ribose-5-phosphate isomerase (259 aa).

It belongs to the ribose 5-phosphate isomerase family.

It is found in the cytoplasm. It catalyses the reaction aldehydo-D-ribose 5-phosphate = D-ribulose 5-phosphate. Its pathway is carbohydrate degradation; pentose phosphate pathway; D-ribose 5-phosphate from D-ribulose 5-phosphate (non-oxidative stage): step 1/1. In Vanderwaltozyma polyspora (strain ATCC 22028 / DSM 70294 / BCRC 21397 / CBS 2163 / NBRC 10782 / NRRL Y-8283 / UCD 57-17) (Kluyveromyces polysporus), this protein is Ribose-5-phosphate isomerase (RKI1).